The following is a 45-amino-acid chain: Large ribosomal subunit protein bL34 (45 aa).

The protein belongs to the bacterial ribosomal protein bL34 family.

The chain is Large ribosomal subunit protein bL34 from Beutenbergia cavernae (strain ATCC BAA-8 / DSM 12333 / CCUG 43141 / JCM 11478 / NBRC 16432 / NCIMB 13614 / HKI 0122).